The chain runs to 81 residues: Photosystem I iron-sulfur center (81 aa).

2 consecutive 4Fe-4S ferredoxin-type domains span residues 2-31 (AHSV…MIPW) and 39-68 (IASA…VRVY). Residues cysteine 11, cysteine 14, cysteine 17, cysteine 21, cysteine 48, cysteine 51, cysteine 54, and cysteine 58 each contribute to the [4Fe-4S] cluster site.

As to quaternary structure, the eukaryotic PSI reaction center is composed of at least 11 subunits. [4Fe-4S] cluster is required as a cofactor.

The protein localises to the plastid. Its subcellular location is the chloroplast thylakoid membrane. It carries out the reaction reduced [plastocyanin] + hnu + oxidized [2Fe-2S]-[ferredoxin] = oxidized [plastocyanin] + reduced [2Fe-2S]-[ferredoxin]. Functionally, apoprotein for the two 4Fe-4S centers FA and FB of photosystem I (PSI); essential for photochemical activity. FB is the terminal electron acceptor of PSI, donating electrons to ferredoxin. The C-terminus interacts with PsaA/B/D and helps assemble the protein into the PSI complex. Required for binding of PsaD and PsaE to PSI. PSI is a plastocyanin-ferredoxin oxidoreductase, converting photonic excitation into a charge separation, which transfers an electron from the donor P700 chlorophyll pair to the spectroscopically characterized acceptors A0, A1, FX, FA and FB in turn. This is Photosystem I iron-sulfur center from Staurastrum punctulatum (Green alga).